The following is a 939-amino-acid chain: Dynamin-like GTPase MGM1, mitochondrial (939 aa).

The N-terminal 27 residues, 1 to 27 (MSAQLRAAAAITPAARRVISGPAAVRR), are a transit peptide targeting the mitochondrion. Residues 85 to 103 (FIRVPALFGGMMLGAVGWV) traverse the membrane as a helical segment. Residues 170 to 183 (AGEGSGSGEGGPNG) show a composition bias toward gly residues. Positions 170–196 (AGEGSGSGEGGPNGGPEPPRQSRAGAA) are disordered. The region spanning 249–522 (TVTLPSIVVI…LEQQMSSKLN (274 aa)) is the Dynamin-type G domain. A G1 motif region spans residues 259-266 (GSQSSGKS). GTP-binding residues include Ser-262, Gly-264, Lys-265, Ser-266, Ser-267, and Gly-281. Position 266 (Ser-266) interacts with Mg(2+). Residues 285 to 287 (ITR) are G2 motif. Mg(2+) is bound by residues Thr-286 and Asp-359. The interval 359–362 (DLPG) is G3 motif. Residues 427–430 (TKMD) are G4 motif. The GTP site is built by Lys-428, Asp-430, and Ser-457. The segment at 456-459 (ISKL) is G5 motif. A stalk region region spans residues 549 to 703 (SAESYLAASL…TSDGIEISLK (155 aa)). Positions 710–809 (DIQPNEWAQG…LSLRIQAAKS (100 aa)) are paddle region. The tract at residues 810–877 (RQCKTLTNKY…GGGLEKFARE (68 aa)) is stalk region. An intrachain disulfide couples Cys-812 to Cys-821. Positions 815–909 (LTNKYYCPEV…KIEELHRISS (95 aa)) constitute a GED domain.

It belongs to the TRAFAC class dynamin-like GTPase superfamily. Dynamin/Fzo/YdjA family. Oligomeric complex consisting of membrane-bound and soluble forms of MGM1. Post-translationally, cleavage of the transit peptide by mitochondrial processing protease (MPP) produces a long integral membrane form of MGM1 (L-MGM1). Further processing by the rhomboid protease PCP1 produces a short peripheral membrane form of MGM1 (S-MGM1). Both forms are required for full activity.

It localises to the mitochondrion inner membrane. The protein localises to the mitochondrion intermembrane space. The enzyme catalyses GTP + H2O = GDP + phosphate + H(+). Its function is as follows. Dynamin-related GTPase that is essential for normal mitochondrial morphology by mediating fusion of the mitochondrial inner membranes, regulating cristae morphology and maintaining respiratory chain function. Exists in two forms: the transmembrane, long form (Dynamin-like GTPase MGM1, long form; L-MGM1), which is tethered to the inner mitochondrial membrane, and the short soluble form (Dynamin-like GTPase MGM1, short form; S-MGM1), which results from proteolytic cleavage and localizes in the intermembrane space. Both forms (L-MGM1 and S-MGM1) cooperate to catalyze the fusion of the mitochondrial inner membrane. The equilibrium between L-MGM1 and S-MGM1 is essential: excess levels of S-MGM1, following loss of mitochondrial membrane potential, lead to an impaired equilibrium between L-MGM1 and S-MGM1, inhibiting mitochondrial fusion. Plays a role in the maintenance and remodeling of mitochondrial cristae, some invaginations of the mitochondrial inner membrane that provide an increase in the surface area. Probably acts by forming helical filaments at the inside of inner membrane tubes with the shape and dimensions of crista junctions. Constitutes the transmembrane long form (L-MGM1) that plays a central role in mitochondrial inner membrane fusion and cristae morphology. L-MGM1 and the soluble short form (S-MGM1) form higher-order helical assemblies that coordinate the fusion of mitochondrial inner membranes. Inner membrane-anchored L-MGM1 molecules initiate membrane remodeling by recruiting soluble S-MGM1 to rapidly polymerize into a flexible cylindrical scaffold encaging the mitochondrial inner membrane. Once at the membrane surface, the formation of S-MGM1 helices induce bilayer curvature. MGM1 dimerization through the paddle region, which inserts into cardiolipin-containing membrane, promotes GTP hydrolysis and the helical assembly of a flexible MGM1 lattice on the membrane, which drives membrane curvature and mitochondrial fusion. Functionally, constitutes the soluble short form (S-MGM1) generated by cleavage by PCP1, which plays a central role in mitochondrial inner membrane fusion and cristae morphology. The transmembrane long form (L-MGM1) and the S-MGM1 form higher-order helical assemblies that coordinate the fusion of mitochondrial inner membranes. Inner membrane-anchored L-MGM1 molecules initiate membrane remodeling by recruiting soluble S-MGM1 to rapidly polymerize into a flexible cylindrical scaffold encaging the mitochondrial inner membrane. Once at the membrane surface, the formation of S-MGM1 helices induce bilayer curvature. MGM1 dimerization through the paddle region, which inserts into cardiolipin-containing membrane, promotes GTP hydrolysis and the helical assembly of a flexible MGM1 lattice on the membrane, which drives membrane curvature and mitochondrial fusion. Excess levels of S-MGM1 produced by cleavage by PCP1 following stress conditions that induce loss of mitochondrial membrane potential, lead to an impaired equilibrium between L-MGM1 and S-MGM1, thereby inhibiting mitochondrial fusion. The protein is Dynamin-like GTPase MGM1, mitochondrial of Chaetomium thermophilum (strain DSM 1495 / CBS 144.50 / IMI 039719) (Thermochaetoides thermophila).